We begin with the raw amino-acid sequence, 274 residues long: Kit ligand (274 aa).

Residues 1–25 form the signal peptide; the sequence is MKKTQTWIITCIYLQLLLFNPLVHS. Position 26 is a pyrrolidone carboxylic acid (Gln-26). Topologically, residues 26–215 are extracellular; the sequence is QGICRNRVTD…SNSIEDSSLQ (190 aa). Intrachain disulfides connect Cys-29/Cys-114 and Cys-68/Cys-164. 4 N-linked (GlcNAc...) asparagine glycosylation sites follow: Asn-90, Asn-97, Asn-145, and Asn-196. A helical transmembrane segment spans residues 216–238; that stretch reads WAAVALPAFFSLVIGFAFGALYW. Topologically, residues 239–274 are cytoplasmic; the sequence is KKKQPNLTRTVENRQINEEDNEISMLQEKEREFQEV.

This sequence belongs to the SCF family. Homodimer, non-covalently linked. Post-translationally, a soluble form is produced by proteolytic processing of the extracellular domain.

Its subcellular location is the cytoplasm. It localises to the cytoskeleton. The protein localises to the cell membrane. The protein resides in the cell projection. It is found in the lamellipodium. Its subcellular location is the filopodium. It localises to the secreted. Its function is as follows. Stimulates the proliferation of mast cells. Able to augment the proliferation of both myeloid and lymphoid hematopoietic progenitors in bone marrow culture. Also mediates cell-cell adhesion. Acts synergistically with other cytokines, probably interleukins. The chain is Kit ligand (KITLG) from Capra hircus (Goat).